The sequence spans 119 residues: Large ribosomal subunit protein bL20 (119 aa).

It belongs to the bacterial ribosomal protein bL20 family.

Binds directly to 23S ribosomal RNA and is necessary for the in vitro assembly process of the 50S ribosomal subunit. It is not involved in the protein synthesizing functions of that subunit. The chain is Large ribosomal subunit protein bL20 from Jannaschia sp. (strain CCS1).